A 196-amino-acid chain; its full sequence is V-type proton ATPase proteolipid subunit (196 aa).

The Lumenal segment spans residues 1–25; it reads MFQLLSFLLSGEATAVERIITDACP. The chain crosses the membrane as a helical span at residues 26–46; sequence VYAPFFGAMGVTAALVFTVMG. Residues 47-72 are Cytoplasmic-facing; that stretch reads AAYGTAKASVGISNMGVMKPDLVIKA. The helical transmembrane segment at 73 to 93 threads the bilayer; the sequence is FIPVIFAGVIAIYGLIICVIL. The Lumenal segment spans residues 94–111; it reads VGGIKPNANYTLMKSFTD. The chain crosses the membrane as a helical span at residues 112-132; the sequence is LGAGLTVGLCGLAAGMAIGIV. Topologically, residues 133–150 are cytoplasmic; sequence GDSGVRAFGQQPKLYVIM. Residues 151–171 form a helical membrane-spanning segment; the sequence is MLILIFSEALGLYGLIIGILL. Residues 172-196 are Lumenal-facing; that stretch reads SSVSDTYCPGQALVPLNSGNVIGKN.

It belongs to the V-ATPase proteolipid subunit family. In terms of assembly, V-ATPase is a heteromultimeric enzyme composed of a peripheral catalytic V1 complex (main components: subunits A, B, C, D, E, and F) attached to an integral membrane V0 proton pore complex (main component: the proteolipid protein; which is present as a hexamer that forms the proton-conducting pore).

Its subcellular location is the vacuole membrane. In terms of biological role, proton-conducting pore forming subunit of the membrane integral V0 complex of vacuolar ATPase. V-ATPase is responsible for acidifying a variety of intracellular compartments in eukaryotic cells. This is V-type proton ATPase proteolipid subunit (vatP) from Dictyostelium discoideum (Social amoeba).